The following is a 143-amino-acid chain: ATP synthase subunit b' (143 aa).

Residues 6 to 26 traverse the membrane as a helical segment; the sequence is ATLPFMALQFLLLAAVLNAIF.

The protein belongs to the ATPase B chain family. F-type ATPases have 2 components, F(1) - the catalytic core - and F(0) - the membrane proton channel. F(1) has five subunits: alpha(3), beta(3), gamma(1), delta(1), epsilon(1). F(0) has four main subunits: a(1), b(1), b'(1) and c(10-14). The alpha and beta chains form an alternating ring which encloses part of the gamma chain. F(1) is attached to F(0) by a central stalk formed by the gamma and epsilon chains, while a peripheral stalk is formed by the delta, b and b' chains.

It localises to the cellular thylakoid membrane. Functionally, f(1)F(0) ATP synthase produces ATP from ADP in the presence of a proton or sodium gradient. F-type ATPases consist of two structural domains, F(1) containing the extramembraneous catalytic core and F(0) containing the membrane proton channel, linked together by a central stalk and a peripheral stalk. During catalysis, ATP synthesis in the catalytic domain of F(1) is coupled via a rotary mechanism of the central stalk subunits to proton translocation. Component of the F(0) channel, it forms part of the peripheral stalk, linking F(1) to F(0). The b'-subunit is a diverged and duplicated form of b found in plants and photosynthetic bacteria. In Nostoc punctiforme (strain ATCC 29133 / PCC 73102), this protein is ATP synthase subunit b'.